The primary structure comprises 231 residues: Flagellar L-ring protein 2 (231 aa).

Positions 1–15 (MKNLILILPLLMLTG) are cleaved as a signal peptide. The N-palmitoyl cysteine moiety is linked to residue C16. C16 carries S-diacylglycerol cysteine lipidation. The segment at 30–54 (SPVGSGLRTQADPIPVTPRMRTPVS) is disordered.

The protein belongs to the FlgH family. In terms of assembly, the basal body constitutes a major portion of the flagellar organelle and consists of four rings (L,P,S, and M) mounted on a central rod.

Its subcellular location is the cell outer membrane. The protein localises to the bacterial flagellum basal body. Functionally, assembles around the rod to form the L-ring and probably protects the motor/basal body from shearing forces during rotation. This is Flagellar L-ring protein 2 from Bradyrhizobium diazoefficiens (strain JCM 10833 / BCRC 13528 / IAM 13628 / NBRC 14792 / USDA 110).